Consider the following 589-residue polypeptide: uncharacterized protein (589 aa).

4 disordered regions span residues 328–365 (LSST…EDGP), 379–459 (SLLG…DPSN), 525–555 (RSTS…GAVK), and 569–589 (VRGT…SRDM). Polar residues predominate over residues 398–425 (VSLSSASTSARPTQRRSSLTPCSQTPQE). The segment covering 426-445 (THQHAREALTTRMESQREAN) has biased composition (basic and acidic residues). The span at 536–545 (QGDDDDEEDG) shows a compositional bias: acidic residues.

This is an uncharacterized protein from Mycosarcoma maydis (Corn smut fungus).